The primary structure comprises 158 residues: SsrA-binding protein (158 aa).

Residues 131-158 are disordered; the sequence is GKKTHDKRETEKKRDWNREKARLLRDRG. Over residues 136 to 158 the composition is skewed to basic and acidic residues; that stretch reads DKRETEKKRDWNREKARLLRDRG.

The protein belongs to the SmpB family.

It is found in the cytoplasm. In terms of biological role, required for rescue of stalled ribosomes mediated by trans-translation. Binds to transfer-messenger RNA (tmRNA), required for stable association of tmRNA with ribosomes. tmRNA and SmpB together mimic tRNA shape, replacing the anticodon stem-loop with SmpB. tmRNA is encoded by the ssrA gene; the 2 termini fold to resemble tRNA(Ala) and it encodes a 'tag peptide', a short internal open reading frame. During trans-translation Ala-aminoacylated tmRNA acts like a tRNA, entering the A-site of stalled ribosomes, displacing the stalled mRNA. The ribosome then switches to translate the ORF on the tmRNA; the nascent peptide is terminated with the 'tag peptide' encoded by the tmRNA and targeted for degradation. The ribosome is freed to recommence translation, which seems to be the essential function of trans-translation. This is SsrA-binding protein from Brucella ovis (strain ATCC 25840 / 63/290 / NCTC 10512).